Reading from the N-terminus, the 68-residue chain is Glu S.griseus protease inhibitor (68 aa).

Residue Ser1 is modified to N-acetylserine. Cys3 and Cys48 are oxidised to a cystine.

It belongs to the protease inhibitor I13 (potato type I serine protease inhibitor) family.

Functionally, competitively inhibits Glu S.griseus protease by forming probably a 1:1 complex. BGIA has no inhibitory activity against 2 other acidic amino acid-specific endopeptidases (S.aureus protease V8 and B.subtilis proteinase), chymotrypsin, trypsin, pancreatic elastase, and papain, although subtilisin Carlsberg was strongly inhibited. The chain is Glu S.griseus protease inhibitor from Momordica charantia (Bitter gourd).